The following is a 257-amino-acid chain: Small ribosomal subunit protein uS2 (257 aa).

The disordered stretch occupies residues 229-257 (QFTPATTSSQEVDKASEQVEIAADDIDEE).

It belongs to the universal ribosomal protein uS2 family.

This Caldicellulosiruptor bescii (strain ATCC BAA-1888 / DSM 6725 / KCTC 15123 / Z-1320) (Anaerocellum thermophilum) protein is Small ribosomal subunit protein uS2.